The sequence spans 104 residues: UPF0145 protein TM1040_1243 (104 aa).

It belongs to the UPF0145 family.

In Ruegeria sp. (strain TM1040) (Silicibacter sp.), this protein is UPF0145 protein TM1040_1243.